A 91-amino-acid chain; its full sequence is Small ribosomal subunit protein uS19 (91 aa).

Belongs to the universal ribosomal protein uS19 family.

Functionally, protein S19 forms a complex with S13 that binds strongly to the 16S ribosomal RNA. The sequence is that of Small ribosomal subunit protein uS19 from Prochlorococcus marinus subsp. pastoris (strain CCMP1986 / NIES-2087 / MED4).